Consider the following 393-residue polypeptide: GDSL esterase/lipase At1g28600 (393 aa).

The signal sequence occupies residues 1 to 22 (MASLDSLVIFLFSTLFVTIVSS). Catalysis depends on Ser-38, which acts as the Nucleophile. 2 N-linked (GlcNAc...) asparagine glycosylation sites follow: Asn-133 and Asn-317. Residues Asp-340 and His-343 contribute to the active site. Asn-382 carries N-linked (GlcNAc...) asparagine glycosylation.

This sequence belongs to the 'GDSL' lipolytic enzyme family.

It is found in the secreted. The polypeptide is GDSL esterase/lipase At1g28600 (Arabidopsis thaliana (Mouse-ear cress)).